The following is a 106-amino-acid chain: Iron-sulfur cluster assembly protein CyaY (106 aa).

Belongs to the frataxin family.

In terms of biological role, involved in iron-sulfur (Fe-S) cluster assembly. May act as a regulator of Fe-S biogenesis. The polypeptide is Iron-sulfur cluster assembly protein CyaY (Escherichia coli (strain SMS-3-5 / SECEC)).